Here is a 254-residue protein sequence, read N- to C-terminus: ATP synthase subunit a (254 aa).

The propeptide at 1-6 (MAFLIH) is removed in mature form. Helical transmembrane passes span 32 to 52 (LTNLGLYTILTVYLVLALHIM), 83 to 103 (IGAANEMYLPFIYSLFFFILI), 119 to 139 (SIMVSIGLSMTIFIGVTILGL), 146 to 166 (FFSFFVPSGTPLGLVPLLVPI), 182 to 202 (LFANVTAGHVLMKILAGFLAP), 207 to 227 (TFIISVLTVLPFIIFTGIIGL), and 228 to 248 (EIAVSFIQAYVFCVLTCSYLK).

This sequence belongs to the ATPase A chain family. As to quaternary structure, F-type ATPases have 2 components, CF(1) - the catalytic core - and CF(0) - the membrane proton channel. CF(1) has five subunits: alpha(3), beta(3), gamma(1), delta(1), epsilon(1). CF(0) has three main subunits: a, b and c.

It localises to the mitochondrion inner membrane. In terms of biological role, mitochondrial membrane ATP synthase (F(1)F(0) ATP synthase or Complex V) produces ATP from ADP in the presence of a proton gradient across the membrane which is generated by electron transport complexes of the respiratory chain. F-type ATPases consist of two structural domains, F(1) - containing the extramembraneous catalytic core and F(0) - containing the membrane proton channel, linked together by a central stalk and a peripheral stalk. During catalysis, ATP synthesis in the catalytic domain of F(1) is coupled via a rotary mechanism of the central stalk subunits to proton translocation. Key component of the proton channel; it may play a direct role in the translocation of protons across the membrane. The chain is ATP synthase subunit a (ATP6) from Mycosarcoma maydis (Corn smut fungus).